The primary structure comprises 489 residues: Cobyric acid synthase (489 aa).

The GATase cobBQ-type domain maps to 254 to 442 (ARVIAVPVLP…VHGLFADDRQ (189 aa)). Cysteine 336 acts as the Nucleophile in catalysis. Residue histidine 434 is part of the active site.

It belongs to the CobB/CobQ family. CobQ subfamily.

It functions in the pathway cofactor biosynthesis; adenosylcobalamin biosynthesis. Its function is as follows. Catalyzes amidations at positions B, D, E, and G on adenosylcobyrinic A,C-diamide. NH(2) groups are provided by glutamine, and one molecule of ATP is hydrogenolyzed for each amidation. This Methylobacterium nodulans (strain LMG 21967 / CNCM I-2342 / ORS 2060) protein is Cobyric acid synthase.